The primary structure comprises 450 residues: Phosphoglucosamine mutase (450 aa).

The active-site Phosphoserine intermediate is the Ser-101. Ser-101, Asp-243, Asp-245, and Asp-247 together coordinate Mg(2+). Ser-101 is subject to Phosphoserine.

The protein belongs to the phosphohexose mutase family. It depends on Mg(2+) as a cofactor. In terms of processing, activated by phosphorylation.

It catalyses the reaction alpha-D-glucosamine 1-phosphate = D-glucosamine 6-phosphate. Catalyzes the conversion of glucosamine-6-phosphate to glucosamine-1-phosphate. This Desulfotalea psychrophila (strain LSv54 / DSM 12343) protein is Phosphoglucosamine mutase.